The primary structure comprises 296 residues: Indole-3-glycerol phosphate synthase (296 aa).

Belongs to the TrpC family.

It carries out the reaction 1-(2-carboxyphenylamino)-1-deoxy-D-ribulose 5-phosphate + H(+) = (1S,2R)-1-C-(indol-3-yl)glycerol 3-phosphate + CO2 + H2O. The protein operates within amino-acid biosynthesis; L-tryptophan biosynthesis; L-tryptophan from chorismate: step 4/5. The chain is Indole-3-glycerol phosphate synthase from Microcystis aeruginosa (strain NIES-843 / IAM M-2473).